An 820-amino-acid polypeptide reads, in one-letter code: DNA mismatch repair protein MutS (820 aa).

Position 615–622 (615–622 (GPNMAGKS)) interacts with ATP.

It belongs to the DNA mismatch repair MutS family.

Functionally, this protein is involved in the repair of mismatches in DNA. It is possible that it carries out the mismatch recognition step. This protein has a weak ATPase activity. This Anaplasma phagocytophilum (strain HZ) protein is DNA mismatch repair protein MutS.